The sequence spans 323 residues: DNA-directed RNA polymerase subunit alpha 1 (323 aa).

Residues 1-228 form an alpha N-terminal domain (alpha-NTD) region; it reads MSNNNSKLEF…EQISVFVSLR (228 aa). The tract at residues 244-323 is alpha C-terminal domain (alpha-CTD); it reads IDPILLKPID…DNFRELVEGK (80 aa).

This sequence belongs to the RNA polymerase alpha chain family. Homodimer. The RNAP catalytic core consists of 2 alpha, 1 beta, 1 beta' and 1 omega subunit. When a sigma factor is associated with the core the holoenzyme is formed, which can initiate transcription.

The catalysed reaction is RNA(n) + a ribonucleoside 5'-triphosphate = RNA(n+1) + diphosphate. In terms of biological role, DNA-dependent RNA polymerase catalyzes the transcription of DNA into RNA using the four ribonucleoside triphosphates as substrates. In Francisella tularensis subsp. tularensis (strain FSC 198), this protein is DNA-directed RNA polymerase subunit alpha 1.